We begin with the raw amino-acid sequence, 430 residues long: Ribosomal protein uS12 methylthiotransferase RimO (430 aa).

Residues 2 to 119 form the MTTase N-terminal domain; the sequence is ISVYSISLGC…WPAMLAHALK (118 aa). Residues Cys11, Cys46, Cys81, Cys145, Cys149, and Cys152 each coordinate [4Fe-4S] cluster. The Radical SAM core domain maps to 131–361; it reads STGPSYAWLK…MEVQAEISEE (231 aa). The 67-residue stretch at 364–430 folds into the TRAM domain; sequence AVHEGTRQQV…TRTYDLVALV (67 aa).

Belongs to the methylthiotransferase family. RimO subfamily. Requires [4Fe-4S] cluster as cofactor.

The protein localises to the cytoplasm. The catalysed reaction is L-aspartate(89)-[ribosomal protein uS12]-hydrogen + (sulfur carrier)-SH + AH2 + 2 S-adenosyl-L-methionine = 3-methylsulfanyl-L-aspartate(89)-[ribosomal protein uS12]-hydrogen + (sulfur carrier)-H + 5'-deoxyadenosine + L-methionine + A + S-adenosyl-L-homocysteine + 2 H(+). In terms of biological role, catalyzes the methylthiolation of an aspartic acid residue of ribosomal protein uS12. The chain is Ribosomal protein uS12 methylthiotransferase RimO from Nitratidesulfovibrio vulgaris (strain DP4) (Desulfovibrio vulgaris).